We begin with the raw amino-acid sequence, 1086 residues long: Isoleucine--tRNA ligase (1086 aa).

The 'HIGH' region signature appears at 53–63; it reads PFANGLPHYGH. The 'KMSKS' region motif lies at 624–628; the sequence is KLSKR. Lys-627 is a binding site for ATP.

This sequence belongs to the class-I aminoacyl-tRNA synthetase family. IleS type 2 subfamily. Monomer. Zn(2+) is required as a cofactor.

Its subcellular location is the cytoplasm. The enzyme catalyses tRNA(Ile) + L-isoleucine + ATP = L-isoleucyl-tRNA(Ile) + AMP + diphosphate. Functionally, catalyzes the attachment of isoleucine to tRNA(Ile). As IleRS can inadvertently accommodate and process structurally similar amino acids such as valine, to avoid such errors it has two additional distinct tRNA(Ile)-dependent editing activities. One activity is designated as 'pretransfer' editing and involves the hydrolysis of activated Val-AMP. The other activity is designated 'posttransfer' editing and involves deacylation of mischarged Val-tRNA(Ile). The protein is Isoleucine--tRNA ligase of Rickettsia typhi (strain ATCC VR-144 / Wilmington).